We begin with the raw amino-acid sequence, 63 residues long: Large ribosomal subunit protein uL29 (63 aa).

Belongs to the universal ribosomal protein uL29 family.

The protein is Large ribosomal subunit protein uL29 of Yersinia enterocolitica serotype O:8 / biotype 1B (strain NCTC 13174 / 8081).